A 129-amino-acid polypeptide reads, in one-letter code: Small ribosomal subunit protein uS12 (129 aa).

The protein belongs to the universal ribosomal protein uS12 family. Part of the 30S ribosomal subunit. Contacts proteins S8 and S17. May interact with IF1 in the 30S initiation complex.

Its function is as follows. With S4 and S5 plays an important role in translational accuracy. Functionally, interacts with and stabilizes bases of the 16S rRNA that are involved in tRNA selection in the A site and with the mRNA backbone. Located at the interface of the 30S and 50S subunits, it traverses the body of the 30S subunit contacting proteins on the other side and probably holding the rRNA structure together. The combined cluster of proteins S8, S12 and S17 appears to hold together the shoulder and platform of the 30S subunit. The chain is Small ribosomal subunit protein uS12 from Rickettsia typhi (strain ATCC VR-144 / Wilmington).